The sequence spans 484 residues: MTSSSGVDNEISLDSPMPIFNESSTLKPIRVAGVVTTGTDHIDPSVLQAYLDDTIMKSITLGQLVKNADVLNKRLCQHHIALNAKQSFHFQGNTYISDEKETHDVVPLMEVVSQLDILPPKTFTAKTGTNFGNDNDAEAYLQFEKLIDKKYLKLPTRVNLEILRGTKIHSSFLFNSYSSLSPQSILNLKVFSQFYNWNTNKGLDIGQRGARLSLRYEPLFLHKLLHNPHSNESPTLFHEWFLETCWRSTKICSQGTSAPYMYSGTMLSQAGDQLRTILGHTFVLDKRDHIMCPTKGSMLKWSNELSPGKHLKTQLELNSVKSWMNDDFITFSTTIKTGYLKNLSSQQSLPVHICDKFQSGGPSDIRGFQTFGLGPRDLYDAVGGDAFVSYGLSVFSRLPWKKVEKSNFRLHWFFNGGKLVNHDNTSLGNCIGQLSKEHSTSTGIGLVLRHPMARFELNFTLPITAHENDLIRKGFQFGLGLAFL.

This sequence belongs to the SAM50/omp85 family. Component of the mitochondrial outer membrane sorting assembly machinery (SAM or TOB) complex, which at least consists of SAM35, SAM37 and SAM50. Associates with the mitochondrial contact site and cristae organizing system (MICOS) complex (also known as MINOS or MitOS complex).

It is found in the mitochondrion outer membrane. Functionally, component of the mitochondrial outer membrane sorting assembly machinery (SAM or TOB) complex, which is required for the sorting of proteins with complicated topology, such as beta-barrel proteins, to the mitochondrial outer membrane after import by the TOM complex. In Saccharomyces cerevisiae (strain ATCC 204508 / S288c) (Baker's yeast), this protein is Sorting assembly machinery 50 kDa subunit (SAM50).